A 245-amino-acid polypeptide reads, in one-letter code: Probable transcriptional regulatory protein Cbei_4222 (245 aa).

Belongs to the TACO1 family.

The protein resides in the cytoplasm. This chain is Probable transcriptional regulatory protein Cbei_4222, found in Clostridium beijerinckii (strain ATCC 51743 / NCIMB 8052) (Clostridium acetobutylicum).